A 527-amino-acid chain; its full sequence is Amine oxidase [flavin-containing] A (527 aa).

At methionine 1 the chain carries N-acetylmethionine. Residues 1–497 (MESLQKTSDA…PSFWERNLPS (497 aa)) lie on the Cytoplasmic side of the membrane. Serine 383 carries the post-translational modification Phosphoserine. Position 406 is an S-8alpha-FAD cysteine (cysteine 406). A helical; Anchor for type IV membrane protein membrane pass occupies residues 498 to 518 (VSGLLKIVGFSTSITALWFVM). Topologically, residues 519–527 (YRFRLLSRS) are mitochondrial intermembrane. The interaction with membrane phospholipid headgroups stretch occupies residues 520-522 (RFR).

This sequence belongs to the flavin monoamine oxidase family. As to quaternary structure, monomer, homo- or heterodimer (containing two subunits of similar size). Each subunit contains a covalently bound flavin. Enzymatically active as monomer. Requires FAD as cofactor.

The protein resides in the mitochondrion outer membrane. It carries out the reaction a secondary aliphatic amine + O2 + H2O = a primary amine + an aldehyde + H2O2. The catalysed reaction is a primary methyl amine + O2 + H2O = an aldehyde + H2O2 + NH4(+). The enzyme catalyses (R)-adrenaline + O2 + H2O = (R)-3,4-dihydroxymandelaldehyde + methylamine + H2O2. It catalyses the reaction dopamine + O2 + H2O = 3,4-dihydroxyphenylacetaldehyde + H2O2 + NH4(+). It carries out the reaction tyramine + O2 + H2O = (4-hydroxyphenyl)acetaldehyde + H2O2 + NH4(+). The catalysed reaction is (R)-noradrenaline + O2 + H2O = (R)-3,4-dihydroxymandelaldehyde + H2O2 + NH4(+). The enzyme catalyses serotonin + O2 + H2O = (5-hydroxyindol-3-yl)acetaldehyde + H2O2 + NH4(+). It catalyses the reaction kynuramine + O2 + H2O = 3-(2-aminophenyl)-3-oxopropanal + H2O2 + NH4(+). It carries out the reaction tryptamine + O2 + H2O = indole-3-acetaldehyde + H2O2 + NH4(+). The catalysed reaction is 2-phenylethylamine + O2 + H2O = 2-phenylacetaldehyde + H2O2 + NH4(+). In terms of biological role, catalyzes the oxidative deamination of primary and some secondary amine such as neurotransmitters, with concomitant reduction of oxygen to hydrogen peroxide and has important functions in the metabolism of neuroactive and vasoactive amines in the central nervous system and peripheral tissues. Preferentially oxidizes serotonin. Also catalyzes the oxidative deamination of kynuramine to 3-(2-aminophenyl)-3-oxopropanal that can spontaneously condense to 4-hydroxyquinoline. The sequence is that of Amine oxidase [flavin-containing] A from Bos taurus (Bovine).